Here is a 456-residue protein sequence, read N- to C-terminus: Cysteine--tRNA ligase (456 aa).

Residue C28 participates in Zn(2+) binding. Residues 30–40 carry the 'HIGH' region motif; the sequence is MTVYDYCHLGH. C209, H234, and E238 together coordinate Zn(2+). The 'KMSKS' region motif lies at 266 to 270; it reads KMSKS. K269 provides a ligand contact to ATP.

The protein belongs to the class-I aminoacyl-tRNA synthetase family. Monomer. It depends on Zn(2+) as a cofactor.

Its subcellular location is the cytoplasm. It carries out the reaction tRNA(Cys) + L-cysteine + ATP = L-cysteinyl-tRNA(Cys) + AMP + diphosphate. The polypeptide is Cysteine--tRNA ligase (Dechloromonas aromatica (strain RCB)).